The chain runs to 635 residues: MRFRRRRFGRRRRYYRKRRGGWRRRFRIRRRRPWRRWRVRRWRRSVFRRRGRRARPYRISAWNPKVLRNCRITGWWPVIQCMDGMEWIKYKPMDLRVEANRIFDKQGSKIETEQMGYLMQYGGGWSSGVISLEGLFNENRLWRNIWSKSNDGMDLVRYFGCRIRLYPTENQGYLFWYDTEFDEQQRRMLDEYTQPSVMLQAKNSRLIVCKQKMPIRRRVKSIFIPPPAQLTTQWKFQQELCQFPLFNWACICIDMDTPFDYNGAWRNAWWLMRRLQNGNMEYIERWGRIPMTGDTELPPADDFKAGGVNKNFKPTGIQRIYPIVAVCLVEGNKRVVKWATVHNGPIDRWRKKQTGTLKLSALRRLVLRVCSESETYYKWTASEFTGAFQQDWWPVSGTEYPLCTIKMEPEFENPTVEVWSWKATIPTAGTLKDYFGLSSGQQWKDTDFGRLQLPRSSHNVDFGHKARFGPFCVKKPPVEFRDSAPNPLNIWVKYTFYFQFGGMYQPPTGIQDPCTSNPTYPVRMVGAVTHPKYAGQGGIATQIGDQGITAASLRAISAAPPNTYTQSAFLKAPETEKEEERESETSFTSAESSSEGDGSSDDQAERRAARKRVIKLLLKRLADRPVDNKRRRFSE.

Residues 571–608 are disordered; it reads KAPETEKEEERESETSFTSAESSSEGDGSSDDQAERRA. Residues 573-584 are compositionally biased toward basic and acidic residues; it reads PETEKEEERESE. The span at 585-597 shows a compositional bias: low complexity; it reads TSFTSAESSSEGD.

Belongs to the anelloviridae capsid protein family.

It is found in the virion. Functionally, self-assembles to form an icosahedral capsid with a T=1 symmetry, about 30 nm in diameter, and consisting of 60 capsid proteins. The capsid encapsulates the genomic DNA. Capsid protein is involved in attachment and entry into the host cell. In Torque teno sus virus 1 (isolate Sd-TTV31), this protein is Capsid protein.